A 202-amino-acid polypeptide reads, in one-letter code: Nigerythrin (202 aa).

Positions Lys23–Asp168 constitute a Ferritin-like diiron domain. Residues Glu40, Glu73, Glu115, Glu118, Glu149, His152, Cys174, Cys177, Cys189, and Cys192 each coordinate Fe cation. Positions Asp169–Tyr202 constitute a Rubredoxin-like domain.

In terms of assembly, homodimer. May possess two rubredoxin-like centers and two hemerythrin-like binuclear-iron centers per dimer.

It is found in the cytoplasm. Its function is as follows. Exhibits NADH peroxidase activity (in vitro). This is Nigerythrin (ngr) from Nitratidesulfovibrio vulgaris (strain ATCC 29579 / DSM 644 / CCUG 34227 / NCIMB 8303 / VKM B-1760 / Hildenborough) (Desulfovibrio vulgaris).